A 273-amino-acid chain; its full sequence is Shikimate dehydrogenase (NADP(+)) (273 aa).

Shikimate contacts are provided by residues 15-17 (SKS) and Thr62. Lys66 acts as the Proton acceptor in catalysis. Position 78 (Asp78) interacts with NADP(+). 2 residues coordinate shikimate: Asn87 and Asp103. NADP(+)-binding positions include 127 to 131 (GAGGA), 150 to 155 (NRTYAR), and Met214. Tyr216 serves as a coordination point for shikimate. Gly238 serves as a coordination point for NADP(+).

It belongs to the shikimate dehydrogenase family. In terms of assembly, homodimer.

It catalyses the reaction shikimate + NADP(+) = 3-dehydroshikimate + NADPH + H(+). Its pathway is metabolic intermediate biosynthesis; chorismate biosynthesis; chorismate from D-erythrose 4-phosphate and phosphoenolpyruvate: step 4/7. Involved in the biosynthesis of the chorismate, which leads to the biosynthesis of aromatic amino acids. Catalyzes the reversible NADPH linked reduction of 3-dehydroshikimate (DHSA) to yield shikimate (SA). This is Shikimate dehydrogenase (NADP(+)) from Yersinia enterocolitica serotype O:8 / biotype 1B (strain NCTC 13174 / 8081).